The sequence spans 912 residues: Probable dipeptidyl-aminopeptidase B (912 aa).

The tract at residues 1-74 is disordered; the sequence is MSSALSPEGD…GPFLGPGASL (74 aa). Residues 1–85 are Cytoplasmic-facing; it reads MSSALSPEGD…REPMDRGLRR (85 aa). Residues 16-27 are compositionally biased toward low complexity; it reads DSLSSVSTTSLV. Residues 30–50 are compositionally biased toward basic and acidic residues; that stretch reads RIQEKTEMDADNDKEKDPRAL. Positions 51–63 are enriched in acidic residues; that stretch reads DDEDPLRDEDDLE. The helical; Signal-anchor for type II membrane protein transmembrane segment at 86-106 threads the bilayer; that stretch reads ILIIVAVVFIGGWLAGLGIFI. Topologically, residues 107-912 are vacuolar; sequence ASGSYHHESD…KRHMVPQALV (806 aa). The N-linked (GlcNAc...) asparagine glycan is linked to Asn-344. The active-site Charge relay system is the Ser-749. N-linked (GlcNAc...) asparagine glycosylation is present at Asn-808. Residues Asp-826 and His-859 each act as charge relay system in the active site. A disordered region spans residues 892-912; that stretch reads PQPQKDPVEKEKRHMVPQALV.

It belongs to the peptidase S9B family.

Its subcellular location is the vacuole membrane. The catalysed reaction is Release of an N-terminal dipeptide, Xaa-Yaa-|-Zaa-, from a polypeptide, preferentially when Yaa is Pro, provided Zaa is neither Pro nor hydroxyproline.. Type IV dipeptidyl-peptidase which removes N-terminal dipeptides sequentially from polypeptides having unsubstituted N-termini provided that the penultimate residue is proline. The sequence is that of Probable dipeptidyl-aminopeptidase B (DAPB) from Fusarium vanettenii (strain ATCC MYA-4622 / CBS 123669 / FGSC 9596 / NRRL 45880 / 77-13-4) (Fusarium solani subsp. pisi).